A 438-amino-acid polypeptide reads, in one-letter code: Thymidine phosphorylase (438 aa).

It belongs to the thymidine/pyrimidine-nucleoside phosphorylase family. As to quaternary structure, homodimer.

It catalyses the reaction thymidine + phosphate = 2-deoxy-alpha-D-ribose 1-phosphate + thymine. Its pathway is pyrimidine metabolism; dTMP biosynthesis via salvage pathway; dTMP from thymine: step 1/2. The enzymes which catalyze the reversible phosphorolysis of pyrimidine nucleosides are involved in the degradation of these compounds and in their utilization as carbon and energy sources, or in the rescue of pyrimidine bases for nucleotide synthesis. This chain is Thymidine phosphorylase, found in Burkholderia orbicola (strain MC0-3).